Reading from the N-terminus, the 577-residue chain is Chaperonin CPN60-1, mitochondrial (577 aa).

A mitochondrion-targeting transit peptide spans 1–34 (MYRAAASLASKARQAGNSLATRQVGSRLAWSRNY).

This sequence belongs to the chaperonin (HSP60) family.

Its subcellular location is the mitochondrion. Functionally, implicated in mitochondrial protein import and macromolecular assembly. May facilitate the correct folding of imported proteins. May also prevent misfolding and promote the refolding and proper assembly of unfolded polypeptides generated under stress conditions in the mitochondrial matrix. This is Chaperonin CPN60-1, mitochondrial (CPN60I) from Zea mays (Maize).